Here is a 451-residue protein sequence, read N- to C-terminus: Phosphoglucosamine mutase (451 aa).

Catalysis depends on Ser101, which acts as the Phosphoserine intermediate. Ser101, Asp240, Asp242, and Asp244 together coordinate Mg(2+). Ser101 bears the Phosphoserine mark.

It belongs to the phosphohexose mutase family. Mg(2+) serves as cofactor. In terms of processing, activated by phosphorylation.

It catalyses the reaction alpha-D-glucosamine 1-phosphate = D-glucosamine 6-phosphate. In terms of biological role, catalyzes the conversion of glucosamine-6-phosphate to glucosamine-1-phosphate. This Streptococcus pyogenes serotype M18 (strain MGAS8232) protein is Phosphoglucosamine mutase.